The sequence spans 259 residues: Insulin-like growth factor-binding protein 4 (259 aa).

Positions 1–22 (MLPLCLVAALLLSASGPRPSLG) are cleaved as a signal peptide. The 81-residue stretch at 24-104 (EAIHCPPCSE…MHGQGLCMEL (81 aa)) folds into the IGFBP N-terminal domain. Cystine bridges form between cysteine 28-cysteine 54, cysteine 31-cysteine 56, cysteine 39-cysteine 57, cysteine 45-cysteine 60, cysteine 68-cysteine 81, and cysteine 75-cysteine 101. Residues 115 to 136 (QPSDKDEGDHPNNSFSPCSPQD) are disordered. An N-linked (GlcNAc...) asparagine glycan is attached at asparagine 126. Intrachain disulfides connect cysteine 132–cysteine 139, cysteine 175–cysteine 205, cysteine 216–cysteine 227, and cysteine 229–cysteine 250. The Thyroglobulin type-1 domain maps to 172–250 (QGSCQSELHR…GLEPKGELDC (79 aa)). At serine 256 the chain carries Phosphoserine.

In terms of assembly, binds IGF2 more than IGF1.

The protein localises to the secreted. In terms of biological role, IGF-binding proteins prolong the half-life of the IGFs and have been shown to either inhibit or stimulate the growth promoting effects of the IGFs on cell culture. They alter the interaction of IGFs with their cell surface receptors. The protein is Insulin-like growth factor-binding protein 4 (IGFBP4) of Sus scrofa (Pig).